The chain runs to 407 residues: 1-deoxy-D-xylulose 5-phosphate reductoisomerase (407 aa).

The NADPH site is built by T25, G26, S27, I28, N53, and N136. K137 contacts 1-deoxy-D-xylulose 5-phosphate. E138 provides a ligand contact to NADPH. D162 is a binding site for Mn(2+). Positions 163, 164, 188, and 211 each coordinate 1-deoxy-D-xylulose 5-phosphate. E164 is a binding site for Mn(2+). G217 provides a ligand contact to NADPH. S224, N229, K230, and E233 together coordinate 1-deoxy-D-xylulose 5-phosphate. E233 is a binding site for Mn(2+).

This sequence belongs to the DXR family. Mg(2+) is required as a cofactor. It depends on Mn(2+) as a cofactor.

It carries out the reaction 2-C-methyl-D-erythritol 4-phosphate + NADP(+) = 1-deoxy-D-xylulose 5-phosphate + NADPH + H(+). It participates in isoprenoid biosynthesis; isopentenyl diphosphate biosynthesis via DXP pathway; isopentenyl diphosphate from 1-deoxy-D-xylulose 5-phosphate: step 1/6. Catalyzes the NADPH-dependent rearrangement and reduction of 1-deoxy-D-xylulose-5-phosphate (DXP) to 2-C-methyl-D-erythritol 4-phosphate (MEP). In Bradyrhizobium sp. (strain ORS 278), this protein is 1-deoxy-D-xylulose 5-phosphate reductoisomerase.